A 41-amino-acid polypeptide reads, in one-letter code: Photosystem I reaction center subunit IX (41 aa).

Residues 7-27 (YLSTAPVLTLVSLTAVAGLLI) form a helical membrane-spanning segment.

The protein belongs to the PsaJ family.

It is found in the plastid. The protein resides in the chloroplast thylakoid membrane. Its function is as follows. May help in the organization of the PsaE and PsaF subunits. The chain is Photosystem I reaction center subunit IX from Chlorella vulgaris (Green alga).